The chain runs to 510 residues: Probable malate:quinone oxidoreductase (510 aa).

This sequence belongs to the MQO family. The cofactor is FAD.

It catalyses the reaction (S)-malate + a quinone = a quinol + oxaloacetate. Its pathway is carbohydrate metabolism; tricarboxylic acid cycle; oxaloacetate from (S)-malate (quinone route): step 1/1. This is Probable malate:quinone oxidoreductase from Wigglesworthia glossinidia brevipalpis.